A 185-amino-acid chain; its full sequence is Male-enhanced antigen 1 (185 aa).

2 disordered regions span residues 1–90 (MGPE…VGDG) and 104–134 (GLHL…IPMD). Composition is skewed to acidic residues over residues 50–60 (SSEEPEEEQEE) and 112–121 (LESEDEDEEG). At Ser-114 the chain carries Phosphoserine.

Highly expressed in testis.

In terms of biological role, may play an important role in spermatogenesis and/or testis development. The polypeptide is Male-enhanced antigen 1 (MEA1) (Homo sapiens (Human)).